We begin with the raw amino-acid sequence, 157 residues long: uncharacterized protein (157 aa).

This is an uncharacterized protein from Schizosaccharomyces pombe (strain 972 / ATCC 24843) (Fission yeast).